Here is a 557-residue protein sequence, read N- to C-terminus: uncharacterized protein (557 aa).

Residues 2-45 are a coiled coil; the sequence is NEDETSILNKKMEKIEVEMAEFERLGAEREKEAVERIVQEENQN. Disordered regions lie at residues 39 to 62, 101 to 127, 356 to 402, and 536 to 557; these read VQEENQNPEVPSNDDASTDIKSRK, NRTYYKNSQGYRRKPKRDDYNNNRKNF, PSPS…YPSN, and ANATSQPLSNLDTGGSAPYDHI. Composition is skewed to polar residues over residues 101-110, 358-380, 390-400, and 536-548; these read NRTYYKNSQG, PSFQEEFPSTSKSPSATPGSSNA, DSATYPTSIYP, and ANATSQPLSNLDT.

Its subcellular location is the cytoplasm. The protein localises to the nucleus. This is an uncharacterized protein from Schizosaccharomyces pombe (strain 972 / ATCC 24843) (Fission yeast).